A 586-amino-acid polypeptide reads, in one-letter code: Capsid scaffolding protein (586 aa).

Active-site charge relay system residues include His-53, Ser-123, and His-142. Over residues 251 to 263 (SEETPENAIKDRS) the composition is skewed to basic and acidic residues. Disordered regions lie at residues 251-288 (SEETPENAIKDRSVSTQTAPSFDISESQQPSGQTHVPA), 330-364 (ARRDNDRRPVSPSREFSRRSRDSTHECSPGRDIWP), 458-486 (NKRDSEYSENNPRKRSARTISENDPYFPG), and 530-586 (SASN…MMAD). A compositionally biased stretch (polar residues) spans 264-284 (VSTQTAPSFDISESQQPSGQT). Positions 312–331 (EDMVYVPFEKYASLLAASAR) are interaction with pAP. Interaction with major capsid protein regions lie at residues 566 to 586 (DAQTKLKRKKEAAAFAQMMAD) and 567 to 586 (AQTKLKRKKEAAAFAQMMAD).

It belongs to the herpesviridae capsid scaffolding protein family. In terms of assembly, homomultimer. Interacts with major capsid protein. Exists in a monomer-dimer equilibrium with the dimer being the active species. Capsid scaffolding protein is cleaved by assemblin after formation of the spherical procapsid. As a result, the capsid obtains its mature, icosahedral shape. Cleavages occur at two or more sites: release (R-site) and maturation (M-site).

It localises to the host cytoplasm. Its subcellular location is the host nucleus. It carries out the reaction Cleaves -Ala-|-Ser- and -Ala-|-Ala- bonds in the scaffold protein.. In terms of biological role, acts as a scaffold protein by binding major capsid protein in the cytoplasm, inducing the nuclear localization of both proteins. Multimerizes in the nucleus such as major capsid protein forms the icosahedral T=16 capsid. Autocatalytic cleavage releases the assembly protein, and subsequently abolishes interaction with major capsid protein. Cleavages products are evicted from the capsid before or during DNA packaging. Protease that plays an essential role in virion assembly within the nucleus. Catalyzes the cleavage of the assembly protein after formation of the spherical procapsid. By that cleavage, the capsid matures and gains its icosahedral shape. The cleavage sites seem to include -Ala-Ser-, -Ala-Ala-, as well as Ala-Thr bonds. Assemblin and cleavages products are evicted from the capsid before or during DNA packaging. Its function is as follows. Plays a major role in capsid assembly. Acts as a scaffold protein by binding major capsid protein. Multimerizes in the nucleus such as major capsid protein forms the icosahedral T=16 capsid. Cleaved by assemblin after capsid completion. The cleavages products are evicted from the capsid before or during DNA packaging. This chain is Capsid scaffolding protein, found in Gallus gallus (Chicken).